A 279-amino-acid polypeptide reads, in one-letter code: Prephenate dehydratase (279 aa).

A Prephenate dehydratase domain is found at 2–178 (KIAYLGPRGS…NSTRFWLLGK (177 aa)). The ACT domain maps to 194–270 (LALTLPDNLP…LGVKVRLLGN (77 aa)).

It catalyses the reaction prephenate + H(+) = 3-phenylpyruvate + CO2 + H2O. It functions in the pathway amino-acid biosynthesis; L-phenylalanine biosynthesis; phenylpyruvate from prephenate: step 1/1. The sequence is that of Prephenate dehydratase (pheA) from Lactococcus lactis subsp. lactis (strain IL1403) (Streptococcus lactis).